The sequence spans 89 residues: Mitochondrial import inner membrane translocase subunit Tim9 (89 aa).

At Ala-2 the chain carries N-acetylalanine. The Twin CX3C motif signature appears at 28 to 52 (CFLDCVKDFTTREVKPEETTCSEHC). Disulfide bonds link Cys-28/Cys-52 and Cys-32/Cys-48.

Belongs to the small Tim family. As to quaternary structure, heterohexamer; composed of 3 copies of TIMM9 and 3 copies of TIMM10/TIM10A, named soluble 70 kDa complex. The complex forms a 6-bladed alpha-propeller structure and associates with the TIMM22 component of the TIM22 complex. Interacts with multi-pass transmembrane proteins in transit. Also forms a complex composed of TIMM9, TIMM10/TIM10A and FXC1/TIM10B. Ubiquitous, with highest expression in heart, kidney, liver and skeletal muscle.

It localises to the mitochondrion inner membrane. In terms of biological role, mitochondrial intermembrane chaperone that participates in the import and insertion of multi-pass transmembrane proteins into the mitochondrial inner membrane. May also be required for the transfer of beta-barrel precursors from the TOM complex to the sorting and assembly machinery (SAM complex) of the outer membrane. Acts as a chaperone-like protein that protects the hydrophobic precursors from aggregation and guide them through the mitochondrial intermembrane space. The sequence is that of Mitochondrial import inner membrane translocase subunit Tim9 (TIMM9) from Homo sapiens (Human).